Here is a 453-residue protein sequence, read N- to C-terminus: Tubulin alpha-13 chain (453 aa).

Glutamine 11 serves as a coordination point for GTP. An N6-acetyllysine modification is found at lysine 40. Residues glutamate 71, serine 140, glycine 144, threonine 145, threonine 179, asparagine 206, and asparagine 228 each coordinate GTP. Glutamate 71 is a binding site for Mg(2+). Residue glutamate 254 is part of the active site. Residues 429–453 form a disordered region; it reads EKDYEEVGTESQEGDGEEGEDGGDQ. Residues 431 to 453 are compositionally biased toward acidic residues; it reads DYEEVGTESQEGDGEEGEDGGDQ.

Belongs to the tubulin family. As to quaternary structure, dimer of alpha and beta chains. A typical microtubule is a hollow water-filled tube with an outer diameter of 25 nm and an inner diameter of 15 nM. Alpha-beta heterodimers associate head-to-tail to form protofilaments running lengthwise along the microtubule wall with the beta-tubulin subunit facing the microtubule plus end conferring a structural polarity. Microtubules usually have 13 protofilaments but different protofilament numbers can be found in some organisms and specialized cells. Mg(2+) serves as cofactor. Post-translationally, acetylation of alpha chains at Lys-40 stabilizes microtubules and affects affinity and processivity of microtubule motors. This modification has a role in multiple cellular functions, ranging from cell motility, cell cycle progression or cell differentiation to intracellular trafficking and signaling.

The protein resides in the cytoplasm. The protein localises to the cytoskeleton. It catalyses the reaction GTP + H2O = GDP + phosphate + H(+). Functionally, tubulin is the major constituent of microtubules, a cylinder consisting of laterally associated linear protofilaments composed of alpha- and beta-tubulin heterodimers. Microtubules grow by the addition of GTP-tubulin dimers to the microtubule end, where a stabilizing cap forms. Below the cap, tubulin dimers are in GDP-bound state, owing to GTPase activity of alpha-tubulin. This is Tubulin alpha-13 chain (TUBA13) from Naegleria pringsheimi (Amoeba).